Consider the following 142-residue polypeptide: Putative regulator of rDNA transcription protein 16 (142 aa).

The next 3 helical transmembrane spans lie at 19–39 (ILLT…VMVA), 84–104 (FLLF…AIFL), and 111–131 (SIFI…GLCH).

The protein resides in the membrane. Its function is as follows. Identified in a screen for mutants with decreased levels of rDNA transcription. The protein is Putative regulator of rDNA transcription protein 16 (RRT16) of Saccharomyces cerevisiae (strain ATCC 204508 / S288c) (Baker's yeast).